Here is a 516-residue protein sequence, read N- to C-terminus: 3-phosphoshikimate 1-carboxyvinyltransferase, chloroplastic (516 aa).

The transit peptide at 1–72 (MAQSSRICHG…KVTASVSTSE (72 aa)) directs the protein to the chloroplast. 3-phosphoshikimate-binding residues include Lys-95, Ser-96, and Arg-100. Residue Lys-95 participates in phosphoenolpyruvate binding. Phosphoenolpyruvate is bound by residues Gly-173 and Arg-203. The 3-phosphoshikimate site is built by Ser-250, Ser-251, Gln-252, Ser-278, Asp-403, and Lys-430. Phosphoenolpyruvate is bound at residue Gln-252. Asp-403 (proton acceptor) is an active-site residue. Residues Arg-434, Arg-476, and Lys-501 each contribute to the phosphoenolpyruvate site.

Belongs to the EPSP synthase family.

It is found in the plastid. Its subcellular location is the chloroplast. It carries out the reaction 3-phosphoshikimate + phosphoenolpyruvate = 5-O-(1-carboxyvinyl)-3-phosphoshikimate + phosphate. The protein operates within metabolic intermediate biosynthesis; chorismate biosynthesis; chorismate from D-erythrose 4-phosphate and phosphoenolpyruvate: step 6/7. In terms of biological role, catalyzes the transfer of the enolpyruvyl moiety of phosphoenolpyruvate (PEP) to the 5-hydroxyl of shikimate-3-phosphate (S3P) to produce enolpyruvyl shikimate-3-phosphate and inorganic phosphate. The chain is 3-phosphoshikimate 1-carboxyvinyltransferase, chloroplastic from Brassica napus (Rape).